The primary structure comprises 531 residues: Anthranilate synthase component 1 (531 aa).

L-tryptophan-binding positions include Ser56 and 284–286; that span reads PYM. 324 to 325 is a chorismate binding site; it reads GS. Glu351 is a Mg(2+) binding site. Chorismate contacts are provided by residues Tyr439, Arg459, 473-475, and Gly475; that span reads GGG. Glu488 contributes to the Mg(2+) binding site. The disordered stretch occupies residues 506–531; it reads LHNITPDSVSAPDSVSSPDSVTEANS. Residues 511–531 are compositionally biased toward low complexity; sequence PDSVSAPDSVSSPDSVTEANS.

It belongs to the anthranilate synthase component I family. In terms of assembly, heterotetramer consisting of two non-identical subunits: a beta subunit (TrpG) and a large alpha subunit (TrpE). The cofactor is Mg(2+).

The catalysed reaction is chorismate + L-glutamine = anthranilate + pyruvate + L-glutamate + H(+). It functions in the pathway amino-acid biosynthesis; L-tryptophan biosynthesis; L-tryptophan from chorismate: step 1/5. With respect to regulation, feedback inhibited by tryptophan. In terms of biological role, part of a heterotetrameric complex that catalyzes the two-step biosynthesis of anthranilate, an intermediate in the biosynthesis of L-tryptophan. In the first step, the glutamine-binding beta subunit (TrpG) of anthranilate synthase (AS) provides the glutamine amidotransferase activity which generates ammonia as a substrate that, along with chorismate, is used in the second step, catalyzed by the large alpha subunit of AS (TrpE) to produce anthranilate. In the absence of TrpG, TrpE can synthesize anthranilate directly from chorismate and high concentrations of ammonia. The chain is Anthranilate synthase component 1 (trpE) from Arthrobacter globiformis.